Here is an 82-residue protein sequence, read N- to C-terminus: ATP synthase subunit c, chloroplastic (82 aa).

2 helical membrane-spanning segments follow: residues 3 to 23 (PIVA…AAIG) and 57 to 77 (FAFM…LLFA).

Belongs to the ATPase C chain family. As to quaternary structure, F-type ATPases have 2 components, F(1) - the catalytic core - and F(0) - the membrane proton channel. F(1) has five subunits: alpha(3), beta(3), gamma(1), delta(1), epsilon(1). F(0) has four main subunits: a(1), b(1), b'(1) and c(10-14). The alpha and beta chains form an alternating ring which encloses part of the gamma chain. F(1) is attached to F(0) by a central stalk formed by the gamma and epsilon chains, while a peripheral stalk is formed by the delta, b and b' chains.

It localises to the plastid. The protein resides in the chloroplast thylakoid membrane. Functionally, f(1)F(0) ATP synthase produces ATP from ADP in the presence of a proton or sodium gradient. F-type ATPases consist of two structural domains, F(1) containing the extramembraneous catalytic core and F(0) containing the membrane proton channel, linked together by a central stalk and a peripheral stalk. During catalysis, ATP synthesis in the catalytic domain of F(1) is coupled via a rotary mechanism of the central stalk subunits to proton translocation. In terms of biological role, key component of the F(0) channel; it plays a direct role in translocation across the membrane. A homomeric c-ring of between 10-14 subunits forms the central stalk rotor element with the F(1) delta and epsilon subunits. The sequence is that of ATP synthase subunit c, chloroplastic from Tetradesmus obliquus (Green alga).